The chain runs to 503 residues: Envelope glycoprotein p57 (503 aa).

An N-terminal signal peptide occupies residues 1 to 22; that stretch reads MQLSMSFLIGFGTLVLALSART. Over 23-467 the chain is Extracellular; the sequence is FDLQGLSCNT…FLNPLGWLRD (445 aa). N-linked (GlcNAc...) asparagine; by host glycans are attached at residues Asn63, Asn109, Asn139, Asn192, Asn196, Asn202, Asn221, Asn230, and Asn235. Positions 274 to 315 are fusion peptide; that stretch reads ILQSLLLGVFGTGIASASQFLRGWLNHPDIIGYIVNGVGVVW. N-linked (GlcNAc...) asparagine; by host glycans are attached at residues Asn321, Asn328, Asn388, and Asn438. Residues 468–488 traverse the membrane as a helical segment; that stretch reads LLAWAAWLGGVLYLISLCVSL. Residues 489-503 lie on the Cytoplasmic side of the membrane; that stretch reads PASFARRRRLGRWQE.

In terms of processing, glycosated; Stabilizes it. A portion of p57 is cleaved into p27 and p29. p27 and p29 are called gp43 when glycosylated, as they seem to have the same molecular weight.

The protein localises to the host endoplasmic reticulum membrane. Its subcellular location is the virion. The protein resides in the host cell membrane. In terms of biological role, unprocessed envelope protein p57 is thought to be involved in attachment of the virus to its cell surface receptor. This attachment induces virion internalization predominantly through clathrin-dependent endocytosis. Envelope protein p27 and p29 presumably linked by disulfide bond are the viral type II fusion protein, involved in pH-dependent fusion within early endosomes after internalization of the virion by endocytosis. This Borna disease virus 1 (BoDV-1) protein is Envelope glycoprotein p57 (G).